The chain runs to 123 residues: Peptide methionine sulfoxide reductase MsrA (123 aa).

The active site involves cysteine 8.

Belongs to the MsrA Met sulfoxide reductase family.

It catalyses the reaction L-methionyl-[protein] + [thioredoxin]-disulfide + H2O = L-methionyl-(S)-S-oxide-[protein] + [thioredoxin]-dithiol. It carries out the reaction [thioredoxin]-disulfide + L-methionine + H2O = L-methionine (S)-S-oxide + [thioredoxin]-dithiol. Functionally, has an important function as a repair enzyme for proteins that have been inactivated by oxidation. Catalyzes the reversible oxidation-reduction of methionine sulfoxide in proteins to methionine. The protein is Peptide methionine sulfoxide reductase MsrA of Thermoactinomyces vulgaris.